The following is a 632-amino-acid chain: Extracellular metalloproteinase 5 (632 aa).

The signal sequence occupies residues 1-20 (MHGLLLAAGLLSLPLHVLAH). The propeptide occupies 21-244 (PQPGTSLAGR…HNVVDYVSHA (224 aa)). Residue Asn-284 is glycosylated (N-linked (GlcNAc...) asparagine). Zn(2+) is bound at residue His-427. Residue Glu-428 is part of the active site. Zn(2+) is bound at residue His-431. 2 N-linked (GlcNAc...) asparagine glycosylation sites follow: Asn-591 and Asn-620.

The protein belongs to the peptidase M36 family. The cofactor is Zn(2+).

It localises to the secreted. Functionally, secreted metalloproteinase probably acting as a virulence factor. This chain is Extracellular metalloproteinase 5 (MEP5), found in Arthroderma otae (strain ATCC MYA-4605 / CBS 113480) (Microsporum canis).